Here is a 169-residue protein sequence, read N- to C-terminus: E1B protein, small T-antigen (169 aa).

This sequence belongs to the adenoviridae E1B 19 kDa protein family.

The sequence is that of E1B protein, small T-antigen from Canine adenovirus serotype 1 (strain CLL) (CAdV-1).